Reading from the N-terminus, the 338-residue chain is Ketol-acid reductoisomerase (NADP(+)) (338 aa).

The KARI N-terminal Rossmann domain occupies 1–181; the sequence is MNVYYDKDCD…GGGRSGIIET (181 aa). NADP(+)-binding positions include 24–27, arginine 47, serine 50, serine 52, and 82–85; these read YGSQ and DEFQ. Histidine 107 is an active-site residue. Glycine 133 is a binding site for NADP(+). The region spanning 182–327 is the KARI C-terminal knotted domain; the sequence is TFKDETETDL…AKLRGMMPWI (146 aa). Positions 190, 194, 226, and 230 each coordinate Mg(2+). Serine 251 serves as a coordination point for substrate.

This sequence belongs to the ketol-acid reductoisomerase family. It depends on Mg(2+) as a cofactor.

The catalysed reaction is (2R)-2,3-dihydroxy-3-methylbutanoate + NADP(+) = (2S)-2-acetolactate + NADPH + H(+). It catalyses the reaction (2R,3R)-2,3-dihydroxy-3-methylpentanoate + NADP(+) = (S)-2-ethyl-2-hydroxy-3-oxobutanoate + NADPH + H(+). It functions in the pathway amino-acid biosynthesis; L-isoleucine biosynthesis; L-isoleucine from 2-oxobutanoate: step 2/4. It participates in amino-acid biosynthesis; L-valine biosynthesis; L-valine from pyruvate: step 2/4. Functionally, involved in the biosynthesis of branched-chain amino acids (BCAA). Catalyzes an alkyl-migration followed by a ketol-acid reduction of (S)-2-acetolactate (S2AL) to yield (R)-2,3-dihydroxy-isovalerate. In the isomerase reaction, S2AL is rearranged via a Mg-dependent methyl migration to produce 3-hydroxy-3-methyl-2-ketobutyrate (HMKB). In the reductase reaction, this 2-ketoacid undergoes a metal-dependent reduction by NADPH to yield (R)-2,3-dihydroxy-isovalerate. The polypeptide is Ketol-acid reductoisomerase (NADP(+)) (Psychrobacter cryohalolentis (strain ATCC BAA-1226 / DSM 17306 / VKM B-2378 / K5)).